Consider the following 521-residue polypeptide: T-box transcription factor TBX5 (521 aa).

Residues 1–45 (MADTEEGFGLPSTPVDSEAKELQAEAKQDPQLGTTSKAPTSPQAA) form a disordered region. A compositionally biased stretch (basic and acidic residues) spans 17–28 (SEAKELQAEAKQ). Over residues 31 to 45 (QLGTTSKAPTSPQAA) the composition is skewed to polar residues. The T-box DNA-binding region spans 63 to 238 (LWLKFHEVGT…NNPFAKGFRG (176 aa)). 2 disordered regions span residues 254 to 281 (EYPV…TRVL) and 332 to 352 (STTE…EEDP). Positions 262-281 (TVRQKVSSNHSPFSGETRVL) are enriched in polar residues.

As to quaternary structure, monomer. Homodimer (via the T-box); binds DNA as homodimer.

Its subcellular location is the nucleus. The protein resides in the cytoplasm. In terms of biological role, DNA-binding protein that regulates the transcription of several genes and is involved in heart development and limb pattern formation. May bind to the core DNA motif of promoters. This is T-box transcription factor TBX5 (TBX5) from Gallus gallus (Chicken).